Here is a 170-residue protein sequence, read N- to C-terminus: Adenine phosphoribosyltransferase (170 aa).

It belongs to the purine/pyrimidine phosphoribosyltransferase family. Homodimer.

It is found in the cytoplasm. It carries out the reaction AMP + diphosphate = 5-phospho-alpha-D-ribose 1-diphosphate + adenine. It participates in purine metabolism; AMP biosynthesis via salvage pathway; AMP from adenine: step 1/1. Catalyzes a salvage reaction resulting in the formation of AMP, that is energically less costly than de novo synthesis. This is Adenine phosphoribosyltransferase from Brevibacillus brevis (strain 47 / JCM 6285 / NBRC 100599).